The chain runs to 379 residues: S-adenosylmethionine decarboxylase proenzyme (379 aa).

Active-site residues include Glu-30 and Glu-33. Ser-96 serves as the catalytic Schiff-base intermediate with substrate; via pyruvic acid. Ser-96 carries the pyruvic acid (Ser); by autocatalysis modification. Cys-110 (proton donor; for catalytic activity) is an active-site residue. Catalysis depends on proton acceptor; for processing activity residues Ser-254 and His-267.

This sequence belongs to the eukaryotic AdoMetDC family. In terms of assembly, heterotetramer of two alpha and two beta chains. It depends on pyruvate as a cofactor. Post-translationally, is synthesized initially as an inactive proenzyme. Formation of the active enzyme involves a self-maturation process in which the active site pyruvoyl group is generated from an internal serine residue via an autocatalytic post-translational modification. Two non-identical subunits are generated from the proenzyme in this reaction, and the pyruvate is formed at the N-terminus of the alpha chain, which is derived from the carboxyl end of the proenzyme. The post-translation cleavage follows an unusual pathway, termed non-hydrolytic serinolysis, in which the side chain hydroxyl group of the serine supplies its oxygen atom to form the C-terminus of the beta chain, while the remainder of the serine residue undergoes an oxidative deamination to produce ammonia and the pyruvoyl group blocking the N-terminus of the alpha chain.

The enzyme catalyses S-adenosyl-L-methionine + H(+) = S-adenosyl 3-(methylsulfanyl)propylamine + CO2. It participates in amine and polyamine biosynthesis; S-adenosylmethioninamine biosynthesis; S-adenosylmethioninamine from S-adenosyl-L-methionine: step 1/1. Its function is as follows. S-adenosylmethionine decarboxylase is essential for the biosynthesis of spermine and spermidine. The alpha subunit contains the active site. The polypeptide is S-adenosylmethionine decarboxylase proenzyme (amd1) (Dictyostelium discoideum (Social amoeba)).